The chain runs to 406 residues: Arginine biosynthesis bifunctional protein ArgJ (406 aa).

Substrate-binding residues include T152, K179, T190, E277, N401, and S406. T190 acts as the Nucleophile in catalysis.

This sequence belongs to the ArgJ family. As to quaternary structure, heterotetramer of two alpha and two beta chains.

It is found in the cytoplasm. The enzyme catalyses N(2)-acetyl-L-ornithine + L-glutamate = N-acetyl-L-glutamate + L-ornithine. It carries out the reaction L-glutamate + acetyl-CoA = N-acetyl-L-glutamate + CoA + H(+). It participates in amino-acid biosynthesis; L-arginine biosynthesis; L-ornithine and N-acetyl-L-glutamate from L-glutamate and N(2)-acetyl-L-ornithine (cyclic): step 1/1. It functions in the pathway amino-acid biosynthesis; L-arginine biosynthesis; N(2)-acetyl-L-ornithine from L-glutamate: step 1/4. Functionally, catalyzes two activities which are involved in the cyclic version of arginine biosynthesis: the synthesis of N-acetylglutamate from glutamate and acetyl-CoA as the acetyl donor, and of ornithine by transacetylation between N(2)-acetylornithine and glutamate. This Neisseria meningitidis serogroup A / serotype 4A (strain DSM 15465 / Z2491) protein is Arginine biosynthesis bifunctional protein ArgJ.